The sequence spans 414 residues: Gamma-glutamyl phosphate reductase (414 aa).

Belongs to the gamma-glutamyl phosphate reductase family.

It localises to the cytoplasm. The enzyme catalyses L-glutamate 5-semialdehyde + phosphate + NADP(+) = L-glutamyl 5-phosphate + NADPH + H(+). It participates in amino-acid biosynthesis; L-proline biosynthesis; L-glutamate 5-semialdehyde from L-glutamate: step 2/2. Its function is as follows. Catalyzes the NADPH-dependent reduction of L-glutamate 5-phosphate into L-glutamate 5-semialdehyde and phosphate. The product spontaneously undergoes cyclization to form 1-pyrroline-5-carboxylate. The sequence is that of Gamma-glutamyl phosphate reductase from Clostridium beijerinckii (strain ATCC 51743 / NCIMB 8052) (Clostridium acetobutylicum).